The chain runs to 276 residues: Rhomboid-type serine protease 2 (276 aa).

The next 5 membrane-spanning stretches (helical) occupy residues 27–47 (LPLF…LTLV), 77–97 (FPFI…FTPL), 109–129 (TSVA…YVFV), 132–152 (FILH…LLLG), and 175–195 (WITP…SSFL). The Nucleophile role is filled by Ser-144. Residue His-197 is part of the active site. The helical transmembrane segment at 198–218 (LAGLLVGYGFGLGYLKFLAPP) threads the bilayer.

It belongs to the peptidase S54 family.

The protein localises to the golgi apparatus membrane. The protein resides in the golgi apparatus. Its subcellular location is the cis-Golgi network membrane. The enzyme catalyses Cleaves type-1 transmembrane domains using a catalytic dyad composed of serine and histidine that are contributed by different transmembrane domains.. Probable rhomboid-type serine protease that catalyzes intramembrane proteolysis. This Neurospora crassa (strain ATCC 24698 / 74-OR23-1A / CBS 708.71 / DSM 1257 / FGSC 987) protein is Rhomboid-type serine protease 2 (rbd-2).